We begin with the raw amino-acid sequence, 303 residues long: UDP-N-acetylenolpyruvoylglucosamine reductase (303 aa).

In terms of domain architecture, FAD-binding PCMH-type spans V27–G191. The active site involves R171. S220 functions as the Proton donor in the catalytic mechanism. E291 is a catalytic residue.

Belongs to the MurB family. FAD is required as a cofactor.

Its subcellular location is the cytoplasm. The enzyme catalyses UDP-N-acetyl-alpha-D-muramate + NADP(+) = UDP-N-acetyl-3-O-(1-carboxyvinyl)-alpha-D-glucosamine + NADPH + H(+). It functions in the pathway cell wall biogenesis; peptidoglycan biosynthesis. Its function is as follows. Cell wall formation. The sequence is that of UDP-N-acetylenolpyruvoylglucosamine reductase from Legionella pneumophila (strain Paris).